The chain runs to 213 residues: FMN-dependent NADH:quinone oxidoreductase (213 aa).

It belongs to the azoreductase type 1 family. Homodimer. The cofactor is FMN.

The catalysed reaction is 2 a quinone + NADH + H(+) = 2 a 1,4-benzosemiquinone + NAD(+). The enzyme catalyses N,N-dimethyl-1,4-phenylenediamine + anthranilate + 2 NAD(+) = 2-(4-dimethylaminophenyl)diazenylbenzoate + 2 NADH + 2 H(+). In terms of biological role, quinone reductase that provides resistance to thiol-specific stress caused by electrophilic quinones. Its function is as follows. Also exhibits azoreductase activity. Catalyzes the reductive cleavage of the azo bond in aromatic azo compounds to the corresponding amines. The protein is FMN-dependent NADH:quinone oxidoreductase of Streptococcus agalactiae serotype III (strain NEM316).